The sequence spans 1498 residues: Golgin subfamily A member 3 (1498 aa).

An N-acetylmethionine modification is found at methionine 1. Positions 1–118 are disordered; the sequence is MDGASAEQDG…GTSAEGSVRK (118 aa). Position 18 is a phosphoserine (serine 18). Over residues 27–36 the composition is skewed to pro residues; that stretch reads PLKPPGPLVP. At serine 57 the chain carries Phosphoserine. Pro residues predominate over residues 71 to 81; that stretch reads PTPPFPDPPSS. The tract at residues 121-141 is interaction with GOPC; the sequence is LQSLRLSLPMQETQLCSTDSP. Disordered regions lie at residues 166–195 and 216–325; these read RVKR…MLNP and SVPR…SAST. The segment at 172–257 is golgi-targeting domain; that stretch reads ERSSQPATKT…DYRTEDSNAG (86 aa). Polar residues-rich tracts occupy residues 173-184 and 269-291; these read RSSQPATKTRLF and TKGS…SLSP. Serine 272 carries the post-translational modification Phosphoserine. The segment covering 315-324 has biased composition (low complexity); sequence SDSSSYSSAS. Phosphoserine occurs at positions 385, 389, and 465. The stretch at 394 to 1459 forms a coiled coil; the sequence is VSLESSAAET…ALTVHESLSS (1066 aa). Positions 789–801 are enriched in basic and acidic residues; the sequence is KEELDRGARRLEE. Disordered regions lie at residues 789 to 809, 974 to 993, 1376 to 1400, and 1440 to 1498; these read KEEL…TSET, QKQK…KEMK, RGAA…PIKI, and DSLQ…GPGE. Serine 983 is modified (phosphoserine). The segment covering 1376-1387 has biased composition (basic and acidic residues); the sequence is RGAAKTRKEPKG. Residue serine 1392 is modified to Phosphoserine. Positions 1440-1452 are enriched in basic and acidic residues; that stretch reads DSLQRQMEEHALT.

As to quaternary structure, homodimer. Interacts with GOLGA7. Isoform 1 interacts with GOPC while isoform 3 does not. Cleaved by caspases in apoptotic cells. In terms of tissue distribution, expressed in all tissues tested. Expressed in liver, testis, lung, heart, salivary gland and kidney.

The protein localises to the cytoplasm. The protein resides in the golgi apparatus. It is found in the golgi stack membrane. Its function is as follows. Golgi auto-antigen; probably involved in maintaining Golgi structure. This chain is Golgin subfamily A member 3 (GOLGA3), found in Homo sapiens (Human).